A 189-amino-acid polypeptide reads, in one-letter code: Peptidyl-tRNA hydrolase (189 aa).

Tyrosine 14 is a tRNA binding site. Histidine 19 functions as the Proton acceptor in the catalytic mechanism. TRNA is bound by residues phenylalanine 64, asparagine 66, and asparagine 112.

Belongs to the PTH family. In terms of assembly, monomer.

The protein localises to the cytoplasm. It carries out the reaction an N-acyl-L-alpha-aminoacyl-tRNA + H2O = an N-acyl-L-amino acid + a tRNA + H(+). Its function is as follows. Hydrolyzes ribosome-free peptidyl-tRNAs (with 1 or more amino acids incorporated), which drop off the ribosome during protein synthesis, or as a result of ribosome stalling. Functionally, catalyzes the release of premature peptidyl moieties from peptidyl-tRNA molecules trapped in stalled 50S ribosomal subunits, and thus maintains levels of free tRNAs and 50S ribosomes. The polypeptide is Peptidyl-tRNA hydrolase (Zymomonas mobilis subsp. mobilis (strain ATCC 31821 / ZM4 / CP4)).